The following is a 237-amino-acid chain: Uridylate kinase (237 aa).

12-15 contributes to the ATP binding site; that stretch reads KLSG. Positions 20-25 are involved in allosteric activation by GTP; sequence GEDGLG. Gly54 serves as a coordination point for UMP. ATP contacts are provided by Gly55 and Arg59. Residues Asp74 and 135 to 142 each bind UMP; that span reads TGNPFFTT. 3 residues coordinate ATP: Thr162, Tyr168, and Asp171.

The protein belongs to the UMP kinase family. In terms of assembly, homohexamer.

It is found in the cytoplasm. It carries out the reaction UMP + ATP = UDP + ADP. The protein operates within pyrimidine metabolism; CTP biosynthesis via de novo pathway; UDP from UMP (UMPK route): step 1/1. Allosterically activated by GTP. Inhibited by UTP. In terms of biological role, catalyzes the reversible phosphorylation of UMP to UDP. This chain is Uridylate kinase, found in Haemophilus influenzae (strain PittGG).